The following is a 735-amino-acid chain: Ribosomal protein S6 kinase alpha-1 (735 aa).

Ser-54 carries the phosphoserine modification. Positions 62 to 321 constitute a Protein kinase 1 domain; sequence FELLKVLGQG…AEEIKRHIFY (260 aa). ATP is bound by residues 68-76 and Lys-94; that span reads LGQGSFGKV. Residue Asp-187 is the Proton acceptor of the active site. Phosphoserine; by PDPK1 is present on Ser-221. At Ser-307 the chain carries Phosphoserine. Residues 322 to 391 enclose the AGC-kinase C-terminal domain; the sequence is STIDWNKLYR…VATGLMEDDS (70 aa). Thr-359 carries the post-translational modification Phosphothreonine. At Ser-363 the chain carries Phosphoserine. A phosphoserine; by autocatalysis mark is found at Ser-369 and Ser-380. Residues 418–675 form the Protein kinase 2 domain; that stretch reads YIVKETIGVG…AKQVLQHPWI (258 aa). Residues 424-432 and Lys-447 each bind ATP; that span reads IGVGSYSVC. Asp-535 functions as the Proton acceptor in the catalytic mechanism. Thr-573 bears the Phosphothreonine mark. Ser-732 bears the Phosphoserine mark.

It belongs to the protein kinase superfamily. AGC Ser/Thr protein kinase family. S6 kinase subfamily. Forms a complex with either MAPK1/ERK2 or MAPK3/ERK1 in quiescent cells. Transiently dissociates following mitogenic stimulation. Interacts with ETV1/ER81 and FGFR1. Requires Mg(2+) as cofactor. In terms of processing, activated by phosphorylation at Ser-221 by PDPK1. Autophosphorylated on Ser-380, as part of the activation process. May be phosphorylated at Thr-359 and Ser-363 by MAPK1/ERK2 and MAPK3/ERK1. Post-translationally, N-terminal myristoylation results in an activated kinase in the absence of added growth factors.

The protein resides in the nucleus. The protein localises to the cytoplasm. The catalysed reaction is L-seryl-[protein] + ATP = O-phospho-L-seryl-[protein] + ADP + H(+). The enzyme catalyses L-threonyl-[protein] + ATP = O-phospho-L-threonyl-[protein] + ADP + H(+). Upon extracellular signal or mitogen stimulation, phosphorylated at Thr-573 in the C-terminal kinase domain (CTKD) by MAPK1/ERK2 and MAPK3/ERK1. The activated CTKD then autophosphorylates Ser-380, allowing binding of PDPK1, which in turn phosphorylates Ser-221 in the N-terminal kinase domain (NTDK) leading to the full activation of the protein and subsequent phosphorylation of the substrates by the NTKD. Functionally, serine/threonine-protein kinase that acts downstream of ERK (MAPK1/ERK2 and MAPK3/ERK1) signaling and mediates mitogenic and stress-induced activation of the transcription factors CREB1, ETV1/ER81 and NR4A1/NUR77, regulates translation through RPS6 and EIF4B phosphorylation, and mediates cellular proliferation, survival, and differentiation by modulating mTOR signaling and repressing pro-apoptotic function of BAD and DAPK1. In fibroblast, is required for EGF-stimulated phosphorylation of CREB1, which results in the subsequent transcriptional activation of several immediate-early genes. In response to mitogenic stimulation (EGF and PMA), phosphorylates and activates NR4A1/NUR77 and ETV1/ER81 transcription factors and the cofactor CREBBP. Upon insulin-derived signal, acts indirectly on the transcription regulation of several genes by phosphorylating GSK3B at 'Ser-9' and inhibiting its activity. Phosphorylates RPS6 in response to serum or EGF via an mTOR-independent mechanism and promotes translation initiation by facilitating assembly of the pre-initiation complex. In response to insulin, phosphorylates EIF4B, enhancing EIF4B affinity for the EIF3 complex and stimulating cap-dependent translation. Is involved in the mTOR nutrient-sensing pathway by directly phosphorylating TSC2 at 'Ser-1798', which potently inhibits TSC2 ability to suppress mTOR signaling, and mediates phosphorylation of RPTOR, which regulates mTORC1 activity and may promote rapamycin-sensitive signaling independently of the PI3K/AKT pathway. Also involved in feedback regulation of mTORC1 and mTORC2 by phosphorylating DEPTOR. Mediates cell survival by phosphorylating the pro-apoptotic proteins BAD and DAPK1 and suppressing their pro-apoptotic function. Promotes the survival of hepatic stellate cells by phosphorylating CEBPB in response to the hepatotoxin carbon tetrachloride (CCl4). Mediates induction of hepatocyte prolifration by TGFA through phosphorylation of CEBPB. Is involved in cell cycle regulation by phosphorylating the CDK inhibitor CDKN1B, which promotes CDKN1B association with 14-3-3 proteins and prevents its translocation to the nucleus and inhibition of G1 progression. Phosphorylates EPHA2 at 'Ser-897', the RPS6KA-EPHA2 signaling pathway controls cell migration. In response to mTORC1 activation, phosphorylates EIF4B at 'Ser-406' and 'Ser-422' which stimulates bicarbonate cotransporter SLC4A7 mRNA translation, increasing SLC4A7 protein abundance and function. This is Ribosomal protein S6 kinase alpha-1 (Rps6ka1) from Rattus norvegicus (Rat).